Reading from the N-terminus, the 57-residue chain is Large ribosomal subunit protein bL32 (57 aa).

The segment at 1-38 (MAVQQNKPTRSKRGMRRSHDALTAVTSLSVDKTSGEKH) is disordered.

The protein belongs to the bacterial ribosomal protein bL32 family.

This Escherichia coli O7:K1 (strain IAI39 / ExPEC) protein is Large ribosomal subunit protein bL32.